Here is a 92-residue protein sequence, read N- to C-terminus: Small ribosomal subunit protein uS19 (92 aa).

The protein belongs to the universal ribosomal protein uS19 family.

Its function is as follows. Protein S19 forms a complex with S13 that binds strongly to the 16S ribosomal RNA. In Azorhizobium caulinodans (strain ATCC 43989 / DSM 5975 / JCM 20966 / LMG 6465 / NBRC 14845 / NCIMB 13405 / ORS 571), this protein is Small ribosomal subunit protein uS19.